The sequence spans 175 residues: Large ribosomal subunit protein uL10 (175 aa).

The protein belongs to the universal ribosomal protein uL10 family. In terms of assembly, part of the ribosomal stalk of the 50S ribosomal subunit. The N-terminus interacts with L11 and the large rRNA to form the base of the stalk. The C-terminus forms an elongated spine to which L12 dimers bind in a sequential fashion forming a multimeric L10(L12)X complex.

Its function is as follows. Forms part of the ribosomal stalk, playing a central role in the interaction of the ribosome with GTP-bound translation factors. This is Large ribosomal subunit protein uL10 from Xylella fastidiosa (strain M12).